A 270-amino-acid polypeptide reads, in one-letter code: ES1 protein, mitochondrial (270 aa).

As to expression, expressed specifically in the inner segments of cone photoreceptor cells of the retina (at protein level).

The protein localises to the mitochondrion. Plays a role in promoting mitochondrial enlargement in cone photoreceptor cells in a fusion-independent and ATP-dependent manner. The polypeptide is ES1 protein, mitochondrial (Danio rerio (Zebrafish)).